The primary structure comprises 318 residues: D-alanine--D-alanine ligase (318 aa).

In terms of domain architecture, ATP-grasp spans 116–315 (KQVWQSLGLP…FEQLSLAVLA (200 aa)). Position 146–201 (146–201 (MSRLGDLVMVKPAQEGSSIGMAKVSNAQQLAAAIQQAFEYDDKVLLEQFIQGSEYT)) interacts with ATP. Mg(2+)-binding residues include Asp269, Glu282, and Asn284.

The protein belongs to the D-alanine--D-alanine ligase family. Mg(2+) serves as cofactor. The cofactor is Mn(2+).

The protein resides in the cytoplasm. It catalyses the reaction 2 D-alanine + ATP = D-alanyl-D-alanine + ADP + phosphate + H(+). Its pathway is cell wall biogenesis; peptidoglycan biosynthesis. In terms of biological role, cell wall formation. This chain is D-alanine--D-alanine ligase, found in Pseudoalteromonas atlantica (strain T6c / ATCC BAA-1087).